The chain runs to 355 residues: Protein RecA (355 aa).

78–85 (GPESSGKT) lines the ATP pocket.

This sequence belongs to the RecA family.

It localises to the cytoplasm. In terms of biological role, can catalyze the hydrolysis of ATP in the presence of single-stranded DNA, the ATP-dependent uptake of single-stranded DNA by duplex DNA, and the ATP-dependent hybridization of homologous single-stranded DNAs. It interacts with LexA causing its activation and leading to its autocatalytic cleavage. In Rhodobacter capsulatus (Rhodopseudomonas capsulata), this protein is Protein RecA.